The chain runs to 1377 residues: MAKTSWTPGQQKVIDTRDCNLLVSAAAGSGKTAVLVERIINRITSENSPINIDQLLIVTFTKAAAGEMRERIGAAIEKKVLEQPDNVHLQKQLTLLYSAQITTIDSFCLSVIRNHFHTIDLDPSFRIAEEAELMLLKSDVLATLLEEKYEEGAEDFLEFVECYSASKSDEPIENFILKLYQFSQSYPYPHEWLEEREKDFLVETAEDINQTSWMKQLLQYVKAILREASDLCAKAIEITNYPDGPKPYLDALLSDQEIIERLLNSDAGSQHSYEEYQDAFSNITFARLSTKKWPDATEERKEEVKAIRQMVKKILSDLSDDFFFQPMEDMLTDMRKVRRPMLVLLSLTHDFLERLDASKEENNLVDFSDIEHFALNILVTKEDGNLVPTKVATEMSEQFVEIMIDEYQDSNYVQEYILSSISKVTRGCPNVFMVGDVKQSIYKFRMARPELFMEKYEQYSTEEGLYRRIDLSKNFRSRAEVLDSINGVFEKIMTKAMGGIEYTKEVSLYPGAQFPEIGMDLDNTSFLFSDTKTELIILDLKEEEASIPDSMDRLDVMALEEDAIELSKRELEAKAVAMRIKQLVHGERGFSVTKRNGEEQDLKRCQYRDIVILLRTMSGWSETFTEILKQEGIPAYSDTQTGYFQTLEVKTVLNYLRILDNPRQDAPLTAILYSPIVGLSAEQLSFLRVKPGKGAEKLSIYDAARECALNYLEIQDEVTQPEETQPVYDSIIQADLMYEKSSAEKTVSMDKNLIETGEKLKRFFATYDKLREKAIYLPVHEIILEFFKETGYDLFVYAMPGGEQRRNNLNLLVQHALSFEESSYHGLFQFIRYIERLLKFEIDYGEAGGLSENDNAVRIMSIHKSKGLEFPVVILAGMGKQFNTMDAREKIVLHADYGIGPECIDYQLRTKCPTLLKQVIKKNIVLDNLGEELRVLYVALTRAKEKLIMIGSANDANDVFDKWRQDSTPGVTPLRFQTLAMAKDYFSFVGPAALYDSRIRVITLTPNDLLEDEYEKQTDIKNKQEELNPYNFLQSFEEESDEQSDEERSDEERSDGEQSDGEQSDGEQPRKDLLTKLSFRYPYEHEAMLPIKTTVSELKKLSQQVDEELTETFTQVKDELTKTWPQVDEELTEKYPQVEELIETSPPVKEESQMLIEPTIPKFLKEEKELRGTERGNLYHKILELIDFSDNKTKLNLREFVSQLANRGLIQEESISSINFERLSRFFESELYQRIQIAYQKGYLYREQPFVIGIPVREISTQKFVRTTQAQASSILSKNEDFSHANLCSCPNSQDYENDDLVLIQGIIDVYFEEEDGIVLVDYKTDAVGELGEEELIRRYQEQIRYYERALNQLLDKTVKEKIIYSFSLGKEIRIKS.

Residues 4–478 form the UvrD-like helicase ATP-binding domain; the sequence is TSWTPGQQKV…IDLSKNFRSR (475 aa). 25–32 is a binding site for ATP; it reads AAAGSGKT. Residues 526 to 867 enclose the UvrD-like helicase C-terminal domain; it reads FLFSDTKTEL…RIMSIHKSKG (342 aa). The segment covering 1036–1065 has biased composition (acidic residues); the sequence is FEEESDEQSDEERSDEERSDGEQSDGEQSD. Positions 1036-1072 are disordered; the sequence is FEEESDEQSDEERSDEERSDGEQSDGEQSDGEQPRKD.

It belongs to the helicase family. AddA subfamily. As to quaternary structure, heterodimer of AddA and AddB/RexB. Mg(2+) serves as cofactor.

The catalysed reaction is Couples ATP hydrolysis with the unwinding of duplex DNA by translocating in the 3'-5' direction.. It carries out the reaction ATP + H2O = ADP + phosphate + H(+). Functionally, the heterodimer acts as both an ATP-dependent DNA helicase and an ATP-dependent, dual-direction single-stranded exonuclease. Recognizes the chi site generating a DNA molecule suitable for the initiation of homologous recombination. The AddA nuclease domain is required for chi fragment generation; this subunit has the helicase and 3' -&gt; 5' nuclease activities. This is ATP-dependent helicase/nuclease subunit A from Lachnoclostridium phytofermentans (strain ATCC 700394 / DSM 18823 / ISDg) (Clostridium phytofermentans).